A 223-amino-acid polypeptide reads, in one-letter code: MKKQILIVAAQSILCSTVFGERSNVGLSTEELGGDSILYFNEDPIVIEIDKKAIDKKTLEQLASTRDVVLTDLPDTLEFIDFNEYAKMKSKSDMLLEYINEYEFDDFERSSEGGLEEEEEEDLIYDFNAQAEDLGKLGSNIYEVVEEKNIVNTYDGNLINASTTESTTTIRPFVTSHSYVASSTPYSNISSLNEDYDNASNFLTPTTVALAVLLTILLFIQAY.

Residues 1 to 20 form the signal peptide; that stretch reads MKKQILIVAAQSILCSTVFG. Asparagine 198 is lipidated: GPI-anchor amidated asparagine. Residues 199 to 223 constitute a propeptide, removed in mature form; it reads ASNFLTPTTVALAVLLTILLFIQAY.

The GPI-anchor is attached to the protein in the endoplasmic reticulum and serves to target the protein to the cell surface. There, the glucosamine-inositol phospholipid moiety is cleaved off and the GPI-modified mannoprotein is covalently attached via its lipidless GPI glycan remnant to the 1,6-beta-glucan of the outer cell wall layer.

The protein resides in the secreted. It is found in the cell wall. It localises to the membrane. Functionally, involved in sporulation. Essential for completion of the nuclear division. This is Sporulation-specific protein 19 (SPO19) from Saccharomyces cerevisiae (strain ATCC 204508 / S288c) (Baker's yeast).